Here is a 123-residue protein sequence, read N- to C-terminus: MQNKIQVKSVETRENALIFCAENTEIEVKELSARNHVLVDSDNLSFLYILENESSFIYVSIPHTCWEAVHEAMNKDTAMFIRVNDVEIELEGLKEEVEYLVENIEGNANYGEELVTAVEKVFL.

The protein belongs to the UPF0738 family.

The polypeptide is UPF0738 protein BcerKBAB4_1107 (Bacillus mycoides (strain KBAB4) (Bacillus weihenstephanensis)).